Consider the following 232-residue polypeptide: Probable transcriptional regulatory protein Bd1964 (232 aa).

The protein belongs to the TACO1 family.

Its subcellular location is the cytoplasm. The chain is Probable transcriptional regulatory protein Bd1964 from Bdellovibrio bacteriovorus (strain ATCC 15356 / DSM 50701 / NCIMB 9529 / HD100).